A 607-amino-acid polypeptide reads, in one-letter code: Translation initiation factor IF-2 (607 aa).

A disordered region spans residues 54–93 (SAPQAQDSTPVAETPAAAQPAAPQAASSQPAAAQAAQAVA). Over residues 62–93 (TPVAETPAAAQPAAPQAASSQPAAAQAAQAVA) the composition is skewed to low complexity. A tr-type G domain is found at 108 to 281 (HRAPVVTIMG…ELEDLRADPK (174 aa)). The segment at 117–124 (GHVDHGKT) is G1. 117–124 (GHVDHGKT) lines the GTP pocket. Residues 142–146 (GITQH) are G2. The G3 stretch occupies residues 163 to 166 (DTPG). Residues 163-167 (DTPGH) and 217-220 (NKVD) contribute to the GTP site. Residues 217–220 (NKVD) form a G4 region. The interval 253–255 (SAK) is G5.

The protein belongs to the TRAFAC class translation factor GTPase superfamily. Classic translation factor GTPase family. IF-2 subfamily.

It localises to the cytoplasm. Functionally, one of the essential components for the initiation of protein synthesis. Protects formylmethionyl-tRNA from spontaneous hydrolysis and promotes its binding to the 30S ribosomal subunits. Also involved in the hydrolysis of GTP during the formation of the 70S ribosomal complex. The polypeptide is Translation initiation factor IF-2 (Deinococcus deserti (strain DSM 17065 / CIP 109153 / LMG 22923 / VCD115)).